Consider the following 355-residue polypeptide: Syntaxin-5 (355 aa).

At 1–333 the chain is on the cytoplasmic side; that stretch reads MIPRKRYGSK…KYFQSVTSNR (333 aa). Polar residues predominate over residues 28 to 37; sequence PATAGSSSSD. A disordered region spans residues 28–51; it reads PATAGSSSSDIAPLPPPVTLVPPP. A compositionally biased stretch (pro residues) spans 40-51; that stretch reads PLPPPVTLVPPP. Positions 245–247 match the IxM motif; signal for cargo packaging into COPII-coated vesicles motif; the sequence is IDM. The region spanning 263 to 325 is the t-SNARE coiled-coil homology domain; the sequence is DSYIQSRADT…EAAHSEILKY (63 aa). Residues 287 to 318 are a coiled coil; sequence FQQLAHMVKEQEETIQRIDENVLGAQLDVEAA. The helical; Anchor for type IV membrane protein transmembrane segment at 334–354 threads the bilayer; sequence WLMVKIFLILIVFFIIFVVFL. Residue alanine 355 is a topological domain, vesicular.

Belongs to the syntaxin family. Part of a ternary complex containing STX5A, NSFL1C and VCP. Identified in a unique SNARE complex composed of the Golgi SNAREs GOSR1, GOSR2, YKT6 and VTI1A. Component of a SNARE complex consisting of STX5, YKT6, GOSR1 and BET1L. Interacts with BET1L. Interacts with BET1. Interacts with COG4. Interacts with GM130/GOLGA2. Interacts (via IxM motif) with SEC24C and SEC24D; mediates STX5 packaging into COPII-coated vesicles. Interacts with VLDLR; this interaction mediates VLDLR translocation from the endoplasmic reticulum to the plasma membrane.

The protein resides in the endoplasmic reticulum-Golgi intermediate compartment membrane. It is found in the golgi apparatus membrane. Its function is as follows. Mediates endoplasmic reticulum to Golgi transport. Together with p115/USO1 and GM130/GOLGA2, involved in vesicle tethering and fusion at the cis-Golgi membrane to maintain the stacked and inter-connected structure of the Golgi apparatus. Required for Golgi to endoplasmic reticulum retrogade transport, and for intra-Golgi transport. Functionally, (Microbial infection) Required for the efficient production of infectious virion during human cytomegalovirus infection. Mechanistically, participates in the formation of the cytoplasmic viral assembly compartment where tegument acquisition and envelopment occur. This is Syntaxin-5 (STX5) from Homo sapiens (Human).